Here is a 211-residue protein sequence, read N- to C-terminus: Putative F-box protein At1g52490 (211 aa).

Residues 12 to 59 (EEEYLQLPLDLIVEILKKLPLKSLVRFRCVSKQFSTIICSLRDFIESV) form the F-box domain.

The sequence is that of Putative F-box protein At1g52490 from Arabidopsis thaliana (Mouse-ear cress).